Here is a 618-residue protein sequence, read N- to C-terminus: MTKKLPSELKQTRKSIQTACEFCHTKHIQCDVGRPCQNCLKRNIGKFCRDKKRKSRKRIEKHGTQPYLNLGKRLVIHDVPSKTVSPSSVHLQRDFLSSDQEKPGKTPAHNTNIQYTYNINDNFQSAGSIPRITNFNTNNRQTVLENTSNNISASQAVHLMNDPIIPTVRKSTLNLKSHFLEQHKAMQQPLATNCLVATSNVPVHSGMDDSNKSDDDVDDETNIHFDSMWCNDEYMKLKDIVDISTPFLPNNSQIFSLQESEYPNPSASTRGNSSLHLTNLLNSTKSVNDQKDSSIGHSTSTFNTYDEVVSRPFISLDMLHLNRGANANTHPSHNAKLESECDSSSHSDADLEKHDTDFISPSKFRELVKTPQDLYDNKCLIKPHNYKLAYTKLLTTLRKKFLEGAEIDKSASVKDEHSTQKHNLRYDLEVIIRSILERYAPIFISLTSNMIEEDLLLQEVTLQRALLDLENMAKLVSCTPMCIWRRSGEICFVSNEFYSLTGFNKNLLLDRTSFIFEYLDHKSVSNYFQIFNELLAFGYNDINKRKKLLMLNACSSTSSKITEGFSFTTDGKAIFTKCNLLLSNGLYLKCACCWTVKRDSFNIPILVMGQFLPIFEMD.

Residues 20-48 (CEFCHTKHIQCDVGRPCQNCLKRNIGKFC) constitute a DNA-binding region (zn(2)-C6 fungal-type). The interval 325–352 (ANANTHPSHNAKLESECDSSSHSDADLE) is disordered. Basic and acidic residues predominate over residues 335 to 352 (AKLESECDSSSHSDADLE). The 73-residue stretch at 466 to 538 (LLDLENMAKL…QIFNELLAFG (73 aa)) folds into the PAS domain.

The protein belongs to the ERT1/acuK family.

The protein resides in the nucleus. In terms of biological role, transcription factor which regulates nonfermentable carbon utilization. Binds specifically to 5'-CGGN(8)CGG-3' and 5'-CGGN(9)CGG-3' sequences in the promoter region. This is Glucose starvation modulator protein 1 (GSM1) from Saccharomyces cerevisiae (strain ATCC 204508 / S288c) (Baker's yeast).